The primary structure comprises 97 residues: Aspartyl/glutamyl-tRNA(Asn/Gln) amidotransferase subunit C (97 aa).

The interval 74-97 is disordered; the sequence is AEQALDQAPASQRDRFEVPRILGE. Residues 85–97 show a composition bias toward basic and acidic residues; the sequence is QRDRFEVPRILGE.

It belongs to the GatC family. Heterotrimer of A, B and C subunits.

The catalysed reaction is L-glutamyl-tRNA(Gln) + L-glutamine + ATP + H2O = L-glutaminyl-tRNA(Gln) + L-glutamate + ADP + phosphate + H(+). The enzyme catalyses L-aspartyl-tRNA(Asn) + L-glutamine + ATP + H2O = L-asparaginyl-tRNA(Asn) + L-glutamate + ADP + phosphate + 2 H(+). Allows the formation of correctly charged Asn-tRNA(Asn) or Gln-tRNA(Gln) through the transamidation of misacylated Asp-tRNA(Asn) or Glu-tRNA(Gln) in organisms which lack either or both of asparaginyl-tRNA or glutaminyl-tRNA synthetases. The reaction takes place in the presence of glutamine and ATP through an activated phospho-Asp-tRNA(Asn) or phospho-Glu-tRNA(Gln). The polypeptide is Aspartyl/glutamyl-tRNA(Asn/Gln) amidotransferase subunit C (Corynebacterium kroppenstedtii (strain DSM 44385 / JCM 11950 / CIP 105744 / CCUG 35717)).